Reading from the N-terminus, the 563-residue chain is Septation ring formation regulator EzrA (563 aa).

The Extracellular segment spans residues 1 to 2 (ME). A helical transmembrane segment spans residues 3-21 (LVIGLLVILLALFAAGYFF). The Cytoplasmic portion of the chain corresponds to 22–563 (RKKIYTEIDR…KKIKADQSAS (542 aa)). Coiled coils occupy residues 133 to 159 (EEKSRGEIEQVRERYSKARKNLLAYSH), 243 to 276 (KGYKLEHIQIEKELDTLTNQVKRAENALLEELDV), and 309 to 529 (SKMP…ERLF).

This sequence belongs to the EzrA family.

The protein localises to the cell membrane. Functionally, negative regulator of FtsZ ring formation; modulates the frequency and position of FtsZ ring formation. Inhibits FtsZ ring formation at polar sites. Interacts either with FtsZ or with one of its binding partners to promote depolymerization. This chain is Septation ring formation regulator EzrA, found in Bacillus velezensis (strain DSM 23117 / BGSC 10A6 / LMG 26770 / FZB42) (Bacillus amyloliquefaciens subsp. plantarum).